The primary structure comprises 423 residues: Protein CLP1 homolog (423 aa).

ATP is bound by residues E16, K57, and 119–124; that span reads DVGKST.

This sequence belongs to the Clp1 family. Clp1 subfamily.

The protein resides in the nucleus. Required for endonucleolytic cleavage during polyadenylation-dependent pre-mRNA 3'-end formation. The protein is Protein CLP1 homolog (cbc) of Drosophila melanogaster (Fruit fly).